A 391-amino-acid chain; its full sequence is 5-amino-6-(D-ribitylamino)uracil--L-tyrosine 4-hydroxyphenyl transferase (391 aa).

In terms of domain architecture, Radical SAM core spans 55-302; it reads VTYVINRNIN…GAVARIYLGN (248 aa). [4Fe-4S] cluster contacts are provided by Cys-69, Cys-73, and Cys-76.

The protein belongs to the radical SAM superfamily. CofH family. As to quaternary structure, consists of two subunits, CofG and CofH. It depends on [4Fe-4S] cluster as a cofactor.

The catalysed reaction is 5-amino-6-(D-ribitylamino)uracil + L-tyrosine + S-adenosyl-L-methionine = 5-amino-5-(4-hydroxybenzyl)-6-(D-ribitylimino)-5,6-dihydrouracil + 2-iminoacetate + 5'-deoxyadenosine + L-methionine + H(+). Its pathway is cofactor biosynthesis; coenzyme F0 biosynthesis. Catalyzes the radical-mediated synthesis of 5-amino-5-(4-hydroxybenzyl)-6-(D-ribitylimino)-5,6-dihydrouracil from 5-amino-6-(D-ribitylamino)uracil and L-tyrosine. The protein is 5-amino-6-(D-ribitylamino)uracil--L-tyrosine 4-hydroxyphenyl transferase of Trichormus variabilis (strain ATCC 29413 / PCC 7937) (Anabaena variabilis).